A 547-amino-acid chain; its full sequence is Threonine synthase (547 aa).

Position 117 is an N6-(pyridoxal phosphate)lysine (Lys117). Pyridoxal 5'-phosphate-binding residues include Gly272, Asn273, Phe274, Asp276, and Thr471.

It belongs to the threonine synthase family. Requires pyridoxal 5'-phosphate as cofactor.

The enzyme catalyses O-phospho-L-homoserine + H2O = L-threonine + phosphate. Its pathway is amino-acid biosynthesis; L-threonine biosynthesis; L-threonine from L-aspartate: step 5/5. Its function is as follows. Catalyzes the gamma-elimination of phosphate from L-phosphohomoserine and the beta-addition of water to produce L-threonine. This is Threonine synthase from Cryptococcus neoformans var. grubii serotype A (strain H99 / ATCC 208821 / CBS 10515 / FGSC 9487) (Filobasidiella neoformans var. grubii).